Here is a 286-residue protein sequence, read N- to C-terminus: MSDYQETLYEGYGQRFRMEKMLHEVRTEHQHLVIFQNPRMGRVMALDGVIQTTEADEFIYHEMLTHVPILAHGAAKRVLIIGGGDGGMLREVAKHLTVEHITMVEIDATVVEMCKEFLPNHSSGAFDDSRLNLVIDDGMRFVATTEEKFDVIISDSTDPIGPGEVLFSENFYQACHRCLNEGGILVTQNGTPFMQLSGVQTTAGRMNGLFADWHFYQAAIPTYIGGAMTFAWGATDKSYRKLPLETLRQRFSGSGIVTRYYNPEVHIGAFALPQYVLHAVNKASND.

Residues 1 to 235 form the PABS domain; that stretch reads MSDYQETLYE…GAMTFAWGAT (235 aa). An S-methyl-5'-thioadenosine-binding site is contributed by Q30. Spermidine contacts are provided by H61 and D85. S-methyl-5'-thioadenosine is bound by residues E105 and 137–138; that span reads DG. The Proton acceptor role is filled by D155. Position 155–158 (155–158) interacts with spermidine; that stretch reads DSTD. P162 lines the S-methyl-5'-thioadenosine pocket.

It belongs to the spermidine/spermine synthase family. As to quaternary structure, homodimer or homotetramer.

The protein resides in the cytoplasm. It carries out the reaction S-adenosyl 3-(methylsulfanyl)propylamine + putrescine = S-methyl-5'-thioadenosine + spermidine + H(+). It functions in the pathway amine and polyamine biosynthesis; spermidine biosynthesis; spermidine from putrescine: step 1/1. Functionally, catalyzes the irreversible transfer of a propylamine group from the amino donor S-adenosylmethioninamine (decarboxy-AdoMet) to putrescine (1,4-diaminobutane) to yield spermidine. In Pseudomonas syringae pv. tomato (strain ATCC BAA-871 / DC3000), this protein is Polyamine aminopropyltransferase.